Consider the following 306-residue polypeptide: Follistatin-related protein 1 (306 aa).

The first 18 residues, 1–18 (MWKRWLALALVTIALVHG), serve as a signal peptide directing secretion. A Follistatin-like domain is found at 28-51 (ICANVFCGAGRECAVTEKGEPTCL). 5 disulfides stabilise this stretch: cysteine 29-cysteine 40, cysteine 34-cysteine 50, cysteine 52-cysteine 82, cysteine 56-cysteine 75, and cysteine 64-cysteine 96. The Kazal-like domain maps to 46–98 (GEPTCLCIEQCKPHKRPVCGSNGKTYLNHCELHRDACLTGSKIQVDYDGHCKE). The N-linked (GlcNAc...) asparagine glycan is linked to asparagine 142. An EF-hand 1 domain is found at 142–176 (NYSEILDKYFKSFDNGDSHLDSSEFLKFVEQNETA). Serine 163 is modified (phosphoserine). Residues asparagine 173 and asparagine 178 are each glycosylated (N-linked (GlcNAc...) asparagine). An EF-hand 2 domain is found at 191-226 (LRGLCVDALIELSDENADWKLSFQEFLKCLNPSFNP). The region spanning 231-285 (CALEDETYADGAETEVDCNRCVCSCGHWVCTAMTCDGKNQKGVQTHTEEEMTRYA) is the VWFC domain.

As to quaternary structure, homodimer. Interacts with SCN10A. Interacts with DIP2A; DIP2A may act as a cell surface receptor for FSTL1. Interacts with BMP4. Interacts with CD14; this interaction promotes TL4-mediated signaling cascade.

The protein resides in the secreted. Its function is as follows. Secreted glycoprotein that is involved in various physiological processes, such as angiogenesis, regulation of the immune response, cell proliferation and differentiation. Plays a role in the development of the central nervous system, skeletal system, lungs, and ureter. Promotes endothelial cell survival, migration and differentiation into network structures in an AKT-dependent manner. Also promotes survival of cardiac myocytes. Initiates various signaling cascades by activating different receptors on the cell surface such as DIP2A, TLR4 or BMP receptors. The polypeptide is Follistatin-related protein 1 (Fstl1) (Rattus norvegicus (Rat)).